The following is an 86-amino-acid chain: RNA-binding protein Hfq (86 aa).

Residues Asp9–Val69 enclose the Sm domain.

Belongs to the Hfq family. In terms of assembly, homohexamer.

Its function is as follows. RNA chaperone that binds small regulatory RNA (sRNAs) and mRNAs to facilitate mRNA translational regulation in response to envelope stress, environmental stress and changes in metabolite concentrations. Also binds with high specificity to tRNAs. The polypeptide is RNA-binding protein Hfq (Thermosipho melanesiensis (strain DSM 12029 / CIP 104789 / BI429)).